The chain runs to 108 residues: Ig kappa chain V region 120 (108 aa).

The segment at 1 to 23 (AFELTQTPSSVEAAVGGTVTIKC) is framework-1. Residues 24 to 34 (QSSQSIGTYLA) are complementarity-determining-1. Residues 35-49 (WYZZKPGQPPKLLIY) form a framework-2 region. The interval 50–56 (RASTLAS) is complementarity-determining-2. The framework-3 stretch occupies residues 57–88 (GVSSRFKGSGSGTEFTLTISGVECADAATYYC). The interval 89–97 (QGTYYZSAS) is complementarity-determining-3. The segment at 98–107 (FGGGTEVVVK) is framework-4.

This Oryctolagus cuniculus (Rabbit) protein is Ig kappa chain V region 120.